Consider the following 238-residue polypeptide: Flagellar L-ring protein (238 aa).

A signal peptide spans 1–16; the sequence is MNKAILAVAMVLLLAG. A lipid anchor (N-palmitoyl cysteine) is attached at Cys-17. Cys-17 carries S-diacylglycerol cysteine lipidation.

The protein belongs to the FlgH family. The basal body constitutes a major portion of the flagellar organelle and consists of four rings (L,P,S, and M) mounted on a central rod.

The protein localises to the cell outer membrane. It is found in the bacterial flagellum basal body. In terms of biological role, assembles around the rod to form the L-ring and probably protects the motor/basal body from shearing forces during rotation. The chain is Flagellar L-ring protein from Brucella melitensis biotype 2 (strain ATCC 23457).